We begin with the raw amino-acid sequence, 434 residues long: Adenylosuccinate synthetase (434 aa).

GTP is bound by residues 25–31 (GDEGKGK) and 53–55 (GHT). The active-site Proton acceptor is Asp-26. Residues Asp-26 and Gly-53 each coordinate Mg(2+). Residues 26-29 (DEGK), 51-54 (NAGH), Thr-142, Arg-156, Asn-233, Thr-248, and Arg-312 each bind IMP. The Proton donor role is filled by His-54. A substrate-binding site is contributed by 308 to 314 (VTTGRKR). GTP contacts are provided by residues Arg-314, 340 to 342 (KLD), and 422 to 424 (GVG).

It belongs to the adenylosuccinate synthetase family. In terms of assembly, homodimer. Mg(2+) serves as cofactor.

The protein localises to the cytoplasm. It carries out the reaction IMP + L-aspartate + GTP = N(6)-(1,2-dicarboxyethyl)-AMP + GDP + phosphate + 2 H(+). Its pathway is purine metabolism; AMP biosynthesis via de novo pathway; AMP from IMP: step 1/2. In terms of biological role, plays an important role in the de novo pathway and in the salvage pathway of purine nucleotide biosynthesis. Catalyzes the first committed step in the biosynthesis of AMP from IMP. The polypeptide is Adenylosuccinate synthetase (Schizosaccharomyces japonicus (strain yFS275 / FY16936) (Fission yeast)).